Reading from the N-terminus, the 464-residue chain is uncharacterized protein (464 aa).

Disordered regions lie at residues 290–374 (YRKQ…ERPK) and 445–464 (ETDD…PLEE). Residues 293–302 (QQQWQQQQQQ) are compositionally biased toward low complexity. Positions 303–318 (RKVKTPIKKQEAKKKA) are enriched in basic residues. The span at 352–367 (DMKQQQQMEKGTTSKQ) shows a compositional bias: polar residues. Residues 445–454 (ETDDEDEENQ) show a composition bias toward acidic residues.

This is an uncharacterized protein from Macaca fascicularis (Crab-eating macaque).